A 328-amino-acid polypeptide reads, in one-letter code: Phospholipid scramblase 1 (328 aa).

Residues 1–93 (MENHSKQTEA…NHPGGPGGTP (93 aa)) are proline-rich domain (PRD). The segment at 1 to 96 (MENHSKQTEA…GGPGGTPWMP (96 aa)) is disordered. The Cytoplasmic portion of the chain corresponds to 1 to 297 (MENHSKQTEA…IQFPLDLDVK (297 aa)). The SH3-binding 1 motif lies at 18–26 (PAGYPPPYP). A PPxY motif motif is present at residues 22 to 25 (PPPY). Over residues 28–47 (AAFQGPSDHAAYPIPQAGYQ) the composition is skewed to low complexity. Positions 49–64 (PPGPYPGPQPGYPVPP) are enriched in pro residues. The short motif at 56-64 (PQPGYPVPP) is the SH3-binding 2 element. At Tyr83 the chain carries Phosphotyrosine; by ABL. An SH3-binding 3 motif is present at residues 93-101 (PWMPAPPPP). A Phosphothreonine; by PKC/PRKCD modification is found at Thr170. 4 S-palmitoyl cysteine lipidation sites follow: Cys193, Cys194, Cys197, and Cys198. The Nuclear localization signal signature appears at 269–275 (SKQWSGF). A helical membrane pass occupies residues 298 to 314 (MKAVMLGACFLIDFMFF). The Extracellular portion of the chain corresponds to 315-328 (ERTGNEEQRSGAWQ).

It belongs to the phospholipid scramblase family. Forms homooligomers in the presence of calcium. Interacts with ABL. Interacts with RELT, RELL1 and RELL2. Interacts with OXSR1 in the presence of RELT. Interacts with OCLN, TOP2A and TOP2B. Interacts with TRPC1, TRPC4 and TRPC5. Interacts with ILDR1. It depends on Ca(2+) as a cofactor. Mg(2+) is required as a cofactor. The cofactor is Zn(2+). Post-translationally, phosphorylation at Thr-170 by PKC/PKCD increases its phospholipid scramblase activity during both cell stimulation and apoptosis. Phosphorylated by OXSR1 in the presence of RELT. Palmitoylation is required for its phospholipid scramblase activity. Palmitoylation regulates its localization to the cell membrane or the nucleus; trafficking to the cell membrane is dependent upon palmitoylation whereas in the absence of palmitoylation, localizes to the nucleus. Highly expressed in kidney, lung, liver and bone marrow, slightly in spleen, heart and macrophage.

The protein resides in the cell membrane. The protein localises to the nucleus. Its subcellular location is the cytoplasm. It is found in the perinuclear region. It carries out the reaction a 1,2-diacyl-sn-glycero-3-phosphocholine(in) = a 1,2-diacyl-sn-glycero-3-phosphocholine(out). It catalyses the reaction a 1,2-diacyl-sn-glycero-3-phosphoethanolamine(in) = a 1,2-diacyl-sn-glycero-3-phosphoethanolamine(out). The enzyme catalyses a 1,2-diacyl-sn-glycero-3-phospho-L-serine(in) = a 1,2-diacyl-sn-glycero-3-phospho-L-serine(out). In terms of biological role, catalyzes calcium-induced ATP-independent rapid bidirectional and non-specific distribution of phospholipids (lipid scrambling or lipid flip-flop) between the inner and outer leaflet of the plasma membrane resulting in collapse of the phospholipid asymmetry which leads to phosphatidylserine externalization on the cell surface. Mediates calcium-dependent phosphatidylserine externalization and apoptosis in neurons via its association with TRPC5. Also exhibits magnesium-dependent nuclease activity against double-stranded DNA and RNA but not single-stranded DNA and can enhance DNA decatenation mediated by TOP2A. Negatively regulates FcR-mediated phagocytosis in differentiated macrophages. May contribute to cytokine-regulated cell proliferation and differentiation. The chain is Phospholipid scramblase 1 (Plscr1) from Mus musculus (Mouse).